A 417-amino-acid chain; its full sequence is Serine hydroxymethyltransferase (417 aa).

(6S)-5,6,7,8-tetrahydrofolate-binding positions include L120 and 124–126 (GHL). K229 is subject to N6-(pyridoxal phosphate)lysine. Residue 354-356 (SPF) participates in (6S)-5,6,7,8-tetrahydrofolate binding.

Belongs to the SHMT family. As to quaternary structure, homodimer. The cofactor is pyridoxal 5'-phosphate.

The protein resides in the cytoplasm. It catalyses the reaction (6R)-5,10-methylene-5,6,7,8-tetrahydrofolate + glycine + H2O = (6S)-5,6,7,8-tetrahydrofolate + L-serine. Its pathway is one-carbon metabolism; tetrahydrofolate interconversion. The protein operates within amino-acid biosynthesis; glycine biosynthesis; glycine from L-serine: step 1/1. Functionally, catalyzes the reversible interconversion of serine and glycine with tetrahydrofolate (THF) serving as the one-carbon carrier. This reaction serves as the major source of one-carbon groups required for the biosynthesis of purines, thymidylate, methionine, and other important biomolecules. Also exhibits THF-independent aldolase activity toward beta-hydroxyamino acids, producing glycine and aldehydes, via a retro-aldol mechanism. This chain is Serine hydroxymethyltransferase, found in Acinetobacter radioresistens.